The sequence spans 59 residues: Photosystem II reaction center protein K (59 aa).

Positions 1-22 (MLNIFSLICLNSALHSSSFFFA) are excised as a propeptide. Residues 38-58 (MPVIPVLFFLLALVWQAAVSF) form a helical membrane-spanning segment.

It belongs to the PsbK family. As to quaternary structure, PSII is composed of 1 copy each of membrane proteins PsbA, PsbB, PsbC, PsbD, PsbE, PsbF, PsbH, PsbI, PsbJ, PsbK, PsbL, PsbM, PsbT, PsbX, PsbY, PsbZ, Psb30/Ycf12, at least 3 peripheral proteins of the oxygen-evolving complex and a large number of cofactors. It forms dimeric complexes.

The protein localises to the plastid. It localises to the chloroplast thylakoid membrane. Its function is as follows. One of the components of the core complex of photosystem II (PSII). PSII is a light-driven water:plastoquinone oxidoreductase that uses light energy to abstract electrons from H(2)O, generating O(2) and a proton gradient subsequently used for ATP formation. It consists of a core antenna complex that captures photons, and an electron transfer chain that converts photonic excitation into a charge separation. The protein is Photosystem II reaction center protein K of Calycanthus floridus var. glaucus (Eastern sweetshrub).